A 333-amino-acid polypeptide reads, in one-letter code: NADH-quinone oxidoreductase subunit H (333 aa).

Transmembrane regions (helical) follow at residues 8 to 28 (VLAA…YLVW), 75 to 95 (ILFM…FVTI), 108 to 128 (IGLL…LLAG), 154 to 174 (MLIT…IEIV), 191 to 211 (PGLF…CSLA), 251 to 271 (IVIG…CPFG), 273 to 293 (FPGV…FIWI), and 312 to 332 (ILIP…KVFA).

It belongs to the complex I subunit 1 family. As to quaternary structure, NDH-1 is composed of 14 different subunits. Subunits NuoA, H, J, K, L, M, N constitute the membrane sector of the complex.

The protein localises to the cell inner membrane. It carries out the reaction a quinone + NADH + 5 H(+)(in) = a quinol + NAD(+) + 4 H(+)(out). In terms of biological role, NDH-1 shuttles electrons from NADH, via FMN and iron-sulfur (Fe-S) centers, to quinones in the respiratory chain. The immediate electron acceptor for the enzyme in this species is believed to be ubiquinone. Couples the redox reaction to proton translocation (for every two electrons transferred, four hydrogen ions are translocated across the cytoplasmic membrane), and thus conserves the redox energy in a proton gradient. This subunit may bind ubiquinone. This Desulfotalea psychrophila (strain LSv54 / DSM 12343) protein is NADH-quinone oxidoreductase subunit H.